The primary structure comprises 321 residues: Aspartate carbamoyltransferase catalytic subunit (321 aa).

Residues Arg65 and Thr66 each coordinate carbamoyl phosphate. Lys93 contacts L-aspartate. 3 residues coordinate carbamoyl phosphate: Arg115, His143, and Gln146. Positions 176 and 230 each coordinate L-aspartate. Residues Gly271 and Pro272 each coordinate carbamoyl phosphate.

It belongs to the aspartate/ornithine carbamoyltransferase superfamily. ATCase family. In terms of assembly, heterododecamer (2C3:3R2) of six catalytic PyrB chains organized as two trimers (C3), and six regulatory PyrI chains organized as three dimers (R2).

It catalyses the reaction carbamoyl phosphate + L-aspartate = N-carbamoyl-L-aspartate + phosphate + H(+). It functions in the pathway pyrimidine metabolism; UMP biosynthesis via de novo pathway; (S)-dihydroorotate from bicarbonate: step 2/3. Functionally, catalyzes the condensation of carbamoyl phosphate and aspartate to form carbamoyl aspartate and inorganic phosphate, the committed step in the de novo pyrimidine nucleotide biosynthesis pathway. The polypeptide is Aspartate carbamoyltransferase catalytic subunit (Bartonella quintana (strain Toulouse) (Rochalimaea quintana)).